Here is a 233-residue protein sequence, read N- to C-terminus: Octanoyltransferase (233 aa).

Positions 38–218 constitute a BPL/LPL catalytic domain; the sequence is AGGPDTLLLL…LVCDALDGVL (181 aa). The segment covering 57 to 66 has biased composition (basic and acidic residues); that stretch reads RRTEPHERPL. The tract at residues 57 to 77 is disordered; that stretch reads RRTEPHERPLDGTPVVDTDRG. Substrate-binding positions include 76–83, 148–150, and 161–163; these read RGGKITWH, AIG, and GFA. The active-site Acyl-thioester intermediate is C179.

This sequence belongs to the LipB family.

Its subcellular location is the cytoplasm. It catalyses the reaction octanoyl-[ACP] + L-lysyl-[protein] = N(6)-octanoyl-L-lysyl-[protein] + holo-[ACP] + H(+). The protein operates within protein modification; protein lipoylation via endogenous pathway; protein N(6)-(lipoyl)lysine from octanoyl-[acyl-carrier-protein]: step 1/2. Its function is as follows. Catalyzes the transfer of endogenously produced octanoic acid from octanoyl-acyl-carrier-protein onto the lipoyl domains of lipoate-dependent enzymes. Lipoyl-ACP can also act as a substrate although octanoyl-ACP is likely to be the physiological substrate. This Mycobacterium avium (strain 104) protein is Octanoyltransferase.